The sequence spans 533 residues: MPVSTLQQEIRRRRTFAIISHPDAGKTTLTEKLLWFGGAIQMAGAVRARKASRHATSDWMELEKQRGISVTSSVMQFPYRNDGGDYIVNLLDTPGHEDFSEDTYRTLTAVDSAVMVIDSVNGVEAQTIKLLNVCRLRSTPILTFINKLDREGRAPIELLDEIENVLQIQCAPMTWPIGMGKSFRGVYHLVNDTVQLFDPKAETEKGATAGMIQGLDNPELDRVLGSQAEELRIDIELVRGASHTFDKDLFLAGKQCPVYFGSAVNNFGVQSLLDALVGLSPEPLARATQTREVAPLEDKFTGFVFKIQANMDPKHRDRIAFVRVCSGRFERGMKLLQVSTGKTVAINNAITFMAQDRNTTEEAYAGDIIGVPNHGTIRLGDAFTEGEPLRFTGIPSFAPEYFRRARLNNPLKTKQLQKGLQQLAEEGATQMFRPLASNDLVLGAVGTLQFDVVAHRLEYEYGVDAIFEPHECATARWLKGKPEDIDKLIDKAGHNVAVDGAGDYVYLAPSQVNLRLTQERFPDIQFMETREVV.

Positions arginine 11–leucine 284 constitute a tr-type G domain. GTP contacts are provided by residues serine 20–threonine 27, aspartate 92–histidine 96, and asparagine 146–aspartate 149.

It belongs to the TRAFAC class translation factor GTPase superfamily. Classic translation factor GTPase family. PrfC subfamily.

Its subcellular location is the cytoplasm. Functionally, increases the formation of ribosomal termination complexes and stimulates activities of RF-1 and RF-2. It binds guanine nucleotides and has strong preference for UGA stop codons. It may interact directly with the ribosome. The stimulation of RF-1 and RF-2 is significantly reduced by GTP and GDP, but not by GMP. This is Peptide chain release factor 3 from Ralstonia nicotianae (strain ATCC BAA-1114 / GMI1000) (Ralstonia solanacearum).